The following is a 159-amino-acid chain: Probable cyclic pyranopterin monophosphate synthase (159 aa).

Substrate contacts are provided by residues 75–77 (LCH) and 111–112 (ME). The active site involves Asp126.

It belongs to the MoaC family. In terms of assembly, homohexamer; trimer of dimers.

It catalyses the reaction (8S)-3',8-cyclo-7,8-dihydroguanosine 5'-triphosphate = cyclic pyranopterin phosphate + diphosphate. It participates in cofactor biosynthesis; molybdopterin biosynthesis. In terms of biological role, catalyzes the conversion of (8S)-3',8-cyclo-7,8-dihydroguanosine 5'-triphosphate to cyclic pyranopterin monophosphate (cPMP). This Pyrococcus abyssi (strain GE5 / Orsay) protein is Probable cyclic pyranopterin monophosphate synthase.